Here is a 522-residue protein sequence, read N- to C-terminus: Major facilitator-type transporter sorT (522 aa).

A disordered region spans residues 1-21 (MSHTEPKAPVNTGEVENGHLY). 12 helical membrane passes run 52-72 (WFIA…SSAY), 89-109 (VFIV…AVWA), 121-141 (QILW…SAGS), 143-163 (NVAT…SPLV), 183-203 (TIYC…GGFV), 211-231 (WVQG…IVFI), 280-300 (WIFL…AIIY), 324-344 (IGGL…VYAI), 366-386 (LPPA…FAWT), 395-415 (VSII…LPIM), 427-447 (ASVL…FPLF), and 457-477 (IHWA…FPLI).

This sequence belongs to the major facilitator superfamily. Sugar transporter (TC 2.A.1.1) family.

It localises to the membrane. In terms of biological role, major facilitator-type transporter; part of the gene cluster that mediates the biosynthesis of sorbicillinoids, a diverse group of yellow secondary metabolites that restrict growth of competing pathogenic fungi but not of bacteria. The protein is Major facilitator-type transporter sorT of Penicillium rubens (strain ATCC 28089 / DSM 1075 / NRRL 1951 / Wisconsin 54-1255) (Penicillium chrysogenum).